The following is a 402-amino-acid chain: MSLTGCLPPRPPCSMRRRTSGGGASVSPVVAMASTAGVGGIGNPTPRGKKPFAPWREVPPQVTHTLPPEKKEVFDSLEGWAADTILPYLKPVEESWQPQDHLPDPRSPSFGDEVAALRERAAGLPDDHLVCLVGDMVTEEALPTYQTMLNTMDGGVRDETGAGGSAWAVWTRAWAAEENRHGDLMNKYLYLTGRVDMRQVEKTIQYLIGSGMDPRTENDPYMGFIYTTFQERATSISHGNTARHAGRHGDAALARVCGTVAADEKRHEAAYAAIVAKLFEVDPDYTVRAFARMMRRKVAMPARLMYDGADDRLFARFAAVAQRLGVYTAADYAGIIEFLVARWGVPGLAAGLSGEGRRAQDFVCSLGPRFRRMEERAQEAAKRAPPAAAAPFSWIHGRQVQL.

The N-terminal 32 residues, 1–32 (MSLTGCLPPRPPCSMRRRTSGGGASVSPVVAM), are a transit peptide targeting the chloroplast. Residues 1–66 (MSLTGCLPPR…EVPPQVTHTL (66 aa)) form a disordered region. Positions 139, 178, 181, 231, 264, and 267 each coordinate Fe cation.

It belongs to the fatty acid desaturase type 2 family. As to quaternary structure, homodimer. Fe(2+) serves as cofactor.

The protein resides in the plastid. It is found in the chloroplast. The protein operates within lipid metabolism; fatty acid metabolism. In terms of biological role, introduces a cis double bond in the acyl chain of an acyl-[acyl-carrier protein]. The sequence is that of Acyl-[acyl-carrier-protein] desaturase 3, chloroplastic from Oryza sativa subsp. japonica (Rice).